The sequence spans 156 residues: Biotin carboxyl carrier protein of acetyl-CoA carboxylase (156 aa).

The 84-residue stretch at 73–156 (PAAAEISGHI…EFDEPLVVIE (84 aa)) folds into the Biotinyl-binding domain. Lys122 carries the post-translational modification N6-biotinyllysine.

Homodimer.

Its pathway is lipid metabolism; fatty acid biosynthesis. In terms of biological role, this protein is a component of the acetyl coenzyme A carboxylase complex; first, biotin carboxylase catalyzes the carboxylation of the carrier protein and then the transcarboxylase transfers the carboxyl group to form malonyl-CoA. This Escherichia coli O6:H1 (strain CFT073 / ATCC 700928 / UPEC) protein is Biotin carboxyl carrier protein of acetyl-CoA carboxylase (accB).